A 382-amino-acid polypeptide reads, in one-letter code: MNEALNIADQTLVLHRHPRIKNETLQAWDSADEYLINYFSENELQKQLNENEQILLVNDSFGALTCYLQAFQRTVVSDSYLSINSIKLNMQRNRCPEENLLLQDSLQQFPENVKIVLIKIPKTLSYLEEMLQKLHAVITPETIVVAAGKVNMIHNSTLDLFEKYIGTTKTSLAKKKSRLIFSLPIIKEVPEKEIAITWEIEKLDWKIHNHANVFSRNHLDIGGRFLMDNLPKGDFSKVVDLGCGNGIIGMAASAAYPKAQITFIDESYMSIDSARINMQKNLPEEQAENARFVVNNGLVGFKPRSYDLILCNPPFHQQQTITDQIAWSMFNDAHFCLVDNGELVIVGNHHLNYQDKLERIFGNCEIVSQNKKFVILRAVKMD.

This sequence belongs to the methyltransferase superfamily. RlmG family.

It localises to the cytoplasm. It catalyses the reaction guanosine(1835) in 23S rRNA + S-adenosyl-L-methionine = N(2)-methylguanosine(1835) in 23S rRNA + S-adenosyl-L-homocysteine + H(+). Its function is as follows. Specifically methylates the guanine in position 1835 (m2G1835) of 23S rRNA. This is Ribosomal RNA large subunit methyltransferase G from Psychromonas ingrahamii (strain DSM 17664 / CCUG 51855 / 37).